We begin with the raw amino-acid sequence, 130 residues long: MEAILNKNMKILIVDDFSTMRRIVKNLLRDLGFNNTQEADDGLTALPMLKKGDFDFVVTDWNMPGMQGIDLLKNIRADEELKHLPVLMITAEAKREQIIEAAQAGVNGYIVKPFTAATLKEKLDKIFERL.

Positions 10 to 127 (KILIVDDFST…TLKEKLDKIF (118 aa)) constitute a Response regulatory domain. Residues D15, D16, D60, and N62 each coordinate Mg(2+). Position 60 is a 4-aspartylphosphate (D60).

As to quaternary structure, interacts with FliM. The cofactor is Mg(2+).

The protein resides in the cytoplasm. Functionally, acts as a response regulator to control chemotaxis. Involved in the transmission of sensory signals from the chemoreceptors to the flagellar motors. Switches the flagellar rotation by binding to the flagellar motor switch protein FliM. In its active (phosphorylated or acetylated) form, exhibits enhanced binding to a switch component, FliM, at the flagellar motor which induces a change from counterclockwise to clockwise flagellar rotation. This Vibrio cholerae serotype O1 (strain ATCC 39315 / El Tor Inaba N16961) protein is Chemotaxis protein CheY-3.